Consider the following 423-residue polypeptide: UPF0597 protein TTE0269 (423 aa).

It belongs to the UPF0597 family.

This chain is UPF0597 protein TTE0269, found in Caldanaerobacter subterraneus subsp. tengcongensis (strain DSM 15242 / JCM 11007 / NBRC 100824 / MB4) (Thermoanaerobacter tengcongensis).